We begin with the raw amino-acid sequence, 119 residues long: Ribonuclease P protein component (119 aa).

It belongs to the RnpA family. As to quaternary structure, consists of a catalytic RNA component (M1 or rnpB) and a protein subunit.

It carries out the reaction Endonucleolytic cleavage of RNA, removing 5'-extranucleotides from tRNA precursor.. Its function is as follows. RNaseP catalyzes the removal of the 5'-leader sequence from pre-tRNA to produce the mature 5'-terminus. It can also cleave other RNA substrates such as 4.5S RNA. The protein component plays an auxiliary but essential role in vivo by binding to the 5'-leader sequence and broadening the substrate specificity of the ribozyme. The protein is Ribonuclease P protein component of Serratia proteamaculans (strain 568).